Consider the following 144-residue polypeptide: Complexin-1 (144 aa).

Residues 1–10 (MVSFLGGGLL) show a composition bias toward gly residues. The tract at residues 1–119 (MVSFLGGGLL…SGFPKNLDDL (119 aa)) is disordered. Composition is skewed to basic and acidic residues over residues 18–27 (LEEKEDKKEG) and 36–86 (AEAK…EGRL). Residues 29 to 67 (EEEDPEIAEAKREAEEKRNEKYRKMEEEREVMRQGIRDK) adopt a coiled-coil conformation. Residues 103–112 (LQSSAQSSGF) show a composition bias toward polar residues. Position 141 is a cysteine methyl ester (Cys141). Cys141 carries the S-farnesyl cysteine lipid modification. The propeptide at 142-144 (NLQ) is removed in mature form.

Belongs to the complexin/synaphin family. In terms of assembly, binds to the SNARE core complex containing SNAP25, synaptobrevin and syntaxin-1. As to expression, expressed in a subset of neurons in the central nervous system, including large serotoninergic Retzius neurons and pressure-sensitive P cells.

It localises to the membrane. Functionally, positively regulates a late step in synaptic vesicle exocytosis. The sequence is that of Complexin-1 (cpx1) from Hirudo medicinalis (Medicinal leech).